Reading from the N-terminus, the 550-residue chain is Chaperonin GroEL (550 aa).

ATP-binding positions include 29–32 (TLGP), Lys50, 86–90 (DGTTT), Gly414, and Asp495.

The protein belongs to the chaperonin (HSP60) family. As to quaternary structure, forms a cylinder of 14 subunits composed of two heptameric rings stacked back-to-back. Interacts with the co-chaperonin GroES.

Its subcellular location is the cytoplasm. It carries out the reaction ATP + H2O + a folded polypeptide = ADP + phosphate + an unfolded polypeptide.. Functionally, together with its co-chaperonin GroES, plays an essential role in assisting protein folding. The GroEL-GroES system forms a nano-cage that allows encapsulation of the non-native substrate proteins and provides a physical environment optimized to promote and accelerate protein folding. This is Chaperonin GroEL from Parvibaculum lavamentivorans (strain DS-1 / DSM 13023 / NCIMB 13966).